The chain runs to 190 residues: Corticoliberin (190 aa).

The signal sequence occupies residues 1–24; sequence MRLPLLVSVGVLLVALLPSPPCRA. Positions 25-147 are excised as a propeptide; it reads LLSRGPIPGA…QEAPAARKRR (123 aa). 2 disordered regions span residues 33–53 and 115–151; these read GARQASQHPQPLSFFQPLPQP and PRRPLDSPAGPAKRGTENALGSRQEAPAARKRRSQEP. Residues 41–53 show a composition bias toward low complexity; it reads PQPLSFFQPLPQP. A188 bears the Alanine amide mark.

The protein belongs to the sauvagine/corticotropin-releasing factor/urotensin I family. In terms of assembly, interacts (via C-terminus) with CRFR1 (via N-terminal extracellular domain). As to expression, produced by the hypothalamus.

It is found in the secreted. In terms of biological role, hormone regulating the release of corticotropin from pituitary gland. Induces NLRP6 in intestinal epithelial cells, hence may influence gut microbiota profile. This Ovis aries (Sheep) protein is Corticoliberin (CRH).